A 339-amino-acid chain; its full sequence is Phenylalanine--tRNA ligase alpha subunit (339 aa).

A compositionally biased stretch (basic and acidic residues) spans 1–14 (MEAKLKQLEEKAKQ). Residues 1–20 (MEAKLKQLEEKAKQDIQAST) are disordered. E254 contributes to the Mg(2+) binding site.

This sequence belongs to the class-II aminoacyl-tRNA synthetase family. Phe-tRNA synthetase alpha subunit type 1 subfamily. As to quaternary structure, tetramer of two alpha and two beta subunits. Mg(2+) is required as a cofactor.

The protein resides in the cytoplasm. It carries out the reaction tRNA(Phe) + L-phenylalanine + ATP = L-phenylalanyl-tRNA(Phe) + AMP + diphosphate + H(+). This Alkaliphilus metalliredigens (strain QYMF) protein is Phenylalanine--tRNA ligase alpha subunit.